Consider the following 212-residue polypeptide: Adenylate kinase (212 aa).

10–15 serves as a coordination point for ATP; the sequence is GAGKGT. An NMP region spans residues 30–59; sequence AIGDIFRTIIKTSTSEAELINNYVKQGELI. Residues Arg-36, 57–59, 85–88, and Gln-92 contribute to the AMP site; these read ELI and GYPR. The interval 122–160 is LID; sequence GRYSCKNCGKIYNRYFVQPKTDNVCDVCGSSTFDYRKDD. ATP is bound at residue Arg-123. Residues Cys-126 and Cys-129 each contribute to the Zn(2+) site. 132–133 lines the ATP pocket; it reads IY. Zn(2+)-binding residues include Cys-146 and Cys-149. The AMP site is built by Arg-157 and Arg-168. ATP is bound at residue Lys-196.

Belongs to the adenylate kinase family. Monomer.

The protein resides in the cytoplasm. It carries out the reaction AMP + ATP = 2 ADP. It participates in purine metabolism; AMP biosynthesis via salvage pathway; AMP from ADP: step 1/1. Its function is as follows. Catalyzes the reversible transfer of the terminal phosphate group between ATP and AMP. Plays an important role in cellular energy homeostasis and in adenine nucleotide metabolism. The sequence is that of Adenylate kinase from Rickettsia conorii (strain ATCC VR-613 / Malish 7).